Reading from the N-terminus, the 129-residue chain is Glycine cleavage system H protein (129 aa).

The region spanning 24–106 (SYTVGITEHA…YGEGWFFRVM (83 aa)) is the Lipoyl-binding domain. K65 is subject to N6-lipoyllysine.

Belongs to the GcvH family. In terms of assembly, the glycine cleavage system is composed of four proteins: P, T, L and H. It depends on (R)-lipoate as a cofactor.

The glycine cleavage system catalyzes the degradation of glycine. The H protein shuttles the methylamine group of glycine from the P protein to the T protein. In Shewanella sp. (strain MR-7), this protein is Glycine cleavage system H protein.